Here is a 279-residue protein sequence, read N- to C-terminus: Tryptophan synthase alpha chain (279 aa).

Residues Glu50 and Asp61 each act as proton acceptor in the active site.

Belongs to the TrpA family. Tetramer of two alpha and two beta chains.

The enzyme catalyses (1S,2R)-1-C-(indol-3-yl)glycerol 3-phosphate + L-serine = D-glyceraldehyde 3-phosphate + L-tryptophan + H2O. It functions in the pathway amino-acid biosynthesis; L-tryptophan biosynthesis; L-tryptophan from chorismate: step 5/5. The alpha subunit is responsible for the aldol cleavage of indoleglycerol phosphate to indole and glyceraldehyde 3-phosphate. The chain is Tryptophan synthase alpha chain from Mesorhizobium japonicum (strain LMG 29417 / CECT 9101 / MAFF 303099) (Mesorhizobium loti (strain MAFF 303099)).